We begin with the raw amino-acid sequence, 1213 residues long: DNA-directed RNA polymerase subunit beta (1213 aa).

The interval 1169–1213 (SRMAEEQEKKKLAEETGKSGDKKENKKDADKPVAPADESDDKVSK) is disordered. Over residues 1171–1199 (MAEEQEKKKLAEETGKSGDKKENKKDADK) the composition is skewed to basic and acidic residues.

The protein belongs to the RNA polymerase beta chain family. The RNAP catalytic core consists of 2 alpha, 1 beta, 1 beta' and 1 omega subunit. When a sigma factor is associated with the core the holoenzyme is formed, which can initiate transcription.

It catalyses the reaction RNA(n) + a ribonucleoside 5'-triphosphate = RNA(n+1) + diphosphate. DNA-dependent RNA polymerase catalyzes the transcription of DNA into RNA using the four ribonucleoside triphosphates as substrates. The chain is DNA-directed RNA polymerase subunit beta from Lactobacillus helveticus (strain DPC 4571).